A 325-amino-acid polypeptide reads, in one-letter code: DNA-directed RNA polymerase subunit alpha (325 aa).

The segment at methionine 1 to glutamate 238 is alpha N-terminal domain (alpha-NTD). An alpha C-terminal domain (alpha-CTD) region spans residues lysine 254–phenylalanine 325.

The protein belongs to the RNA polymerase alpha chain family. Homodimer. The RNAP catalytic core consists of 2 alpha, 1 beta, 1 beta' and 1 omega subunit. When a sigma factor is associated with the core the holoenzyme is formed, which can initiate transcription.

It catalyses the reaction RNA(n) + a ribonucleoside 5'-triphosphate = RNA(n+1) + diphosphate. DNA-dependent RNA polymerase catalyzes the transcription of DNA into RNA using the four ribonucleoside triphosphates as substrates. The polypeptide is DNA-directed RNA polymerase subunit alpha (Leptospira borgpetersenii serovar Hardjo-bovis (strain JB197)).